Here is a 518-residue protein sequence, read N- to C-terminus: DNA-(apurinic or apyrimidinic site) endonuclease 2 (518 aa).

Mg(2+) is bound by residues asparagine 8 and glutamate 48. The active site involves tyrosine 156. 4 residues coordinate Mg(2+): aspartate 197, asparagine 199, aspartate 303, and histidine 304. Catalysis depends on aspartate 197, which acts as the Proton donor/acceptor. Histidine 304 serves as the catalytic Proton acceptor. Residues 355–405 (STLQHNNQTRVQTCQNKAQVRSTRPQPSQVGSSRGQKNLKSYFQPSPSCPQ) show a composition bias toward polar residues. The disordered stretch occupies residues 355 to 407 (STLQHNNQTRVQTCQNKAQVRSTRPQPSQVGSSRGQKNLKSYFQPSPSCPQAS). Lysine 371 is covalently cross-linked (Glycyl lysine isopeptide (Lys-Gly) (interchain with G-Cter in ubiquitin)). Positions 390–397 (QKNLKSYF) are required for the interaction and colocalization with PCNA in nuclear foci in presence of oxidative-induced DNA damaging agents. Zn(2+) is bound by residues cysteine 469, histidine 472, cysteine 495, and cysteine 509. The GRF-type zinc-finger motif lies at 469–518 (CGGHREPCVMRTVKKPGPNLGRRFYMCARPRGPPTDPSSRCNFFLWSRPS).

This sequence belongs to the DNA repair enzymes AP/ExoA family. Interacts with PCNA; this interaction is triggered by reactive oxygen species and increased by misincorporation of uracil in nuclear DNA. The cofactor is Mg(2+). Mn(2+) serves as cofactor. Post-translationally, ubiquitinated by the CUL9-RBX1 complex. Ubiquitinated by MKRN3 at Lys-371 leading to proteasomal degradation. As to expression, highly expressed in brain and kidney. Weakly expressed in the fetal brain.

The protein resides in the nucleus. The protein localises to the cytoplasm. Its subcellular location is the mitochondrion. It carries out the reaction Exonucleolytic cleavage in the 3'- to 5'-direction to yield nucleoside 5'-phosphates.. With respect to regulation, 3'-5' exonuclease activity is activated by sodium and manganese. 3'-5' exonuclease and 3'-phosphodiesterase activities are stimulated in presence of PCNA. Functions as a weak apurinic/apyrimidinic (AP) endodeoxyribonuclease in the DNA base excision repair (BER) pathway of DNA lesions induced by oxidative and alkylating agents. Initiates repair of AP sites in DNA by catalyzing hydrolytic incision of the phosphodiester backbone immediately adjacent to the damage, generating a single-strand break with 5'-deoxyribose phosphate and 3'-hydroxyl ends. Also displays double-stranded DNA 3'-5' exonuclease, 3'-phosphodiesterase activities. Shows robust 3'-5' exonuclease activity on 3'-recessed heteroduplex DNA and is able to remove mismatched nucleotides preferentially. Also exhibits 3'-5' exonuclease activity on a single nucleotide gap containing heteroduplex DNA and on blunt-ended substrates. Shows fairly strong 3'-phosphodiesterase activity involved in the removal of 3'-damaged termini formed in DNA by oxidative agents. In the nucleus functions in the PCNA-dependent BER pathway. Plays a role in reversing blocked 3' DNA ends, problematic lesions that preclude DNA synthesis. Required for somatic hypermutation (SHM) and DNA cleavage step of class switch recombination (CSR) of immunoglobulin genes. Required for proper cell cycle progression during proliferation of peripheral lymphocytes. In Homo sapiens (Human), this protein is DNA-(apurinic or apyrimidinic site) endonuclease 2 (APEX2).